Consider the following 124-residue polypeptide: Protein MT1307 (124 aa).

The segment at residues 1–35 is a signal peptide (tat-type signal); it reads MTTMITLRRRFAVAVAGVATAAATTVTLAPAPANA.

To M.tuberculosis Rv1813c. Predicted to be exported by the Tat system. The position of the signal peptide cleavage has not been experimentally proven.

In Mycobacterium tuberculosis (strain CDC 1551 / Oshkosh), this protein is Protein MT1307.